The primary structure comprises 339 residues: Scoulerine-9-O-methyltransferase 3 (339 aa).

Residue M161 participates in S-adenosyl-L-methionine binding. A substrate-binding site is contributed by D164. S-adenosyl-L-methionine contacts are provided by residues T165, G191, D214, 228-229, and K242; that span reads DV. A substrate-binding site is contributed by 243–247; the sequence is SILHE. H246 (proton acceptor) is an active-site residue.

It belongs to the class I-like SAM-binding methyltransferase superfamily. Cation-independent O-methyltransferase family. COMT subfamily. In terms of assembly, homodimer. Forms heterodimer with SOMT2. The heterodimer SOMT2-SOMT3 possesses 3-O-acetyl-4'-O-demethylpapaveroxine 4'-O-methyltransferase activity, where SOMT2 is the catalytic subunit. In terms of tissue distribution, highly expressed in capsules. Expressed is stems. Expressed at low levels in roots.

The enzyme catalyses (S)-scoulerine + S-adenosyl-L-methionine = (S)-tetrahydrocolumbamine + S-adenosyl-L-homocysteine + H(+). The protein operates within alkaloid biosynthesis. Its function is as follows. Methyltransferase involved in the biosynthesis of the benzylisoquinoline alkaloid noscapine. Catalyzes the conversion of (S)-scoulerine to (S)-tetrahydrocolumbamine. The chain is Scoulerine-9-O-methyltransferase 3 from Papaver somniferum (Opium poppy).